A 395-amino-acid chain; its full sequence is Gastric triacylglycerol lipase (395 aa).

Residues 1-18 form the signal peptide; that stretch reads MWLLLVTSVLSAFGGAHG. The N-linked (GlcNAc...) asparagine glycan is linked to N33. An AB hydrolase-1 domain is found at 81 to 376; the sequence is LQHGLIASAT…LPYNHLDFIW (296 aa). The Nucleophile role is filled by S171. The cysteines at positions 245 and 254 are disulfide-linked. N270 carries N-linked (GlcNAc...) asparagine glycosylation. Active-site charge relay system residues include D342 and H371.

This sequence belongs to the AB hydrolase superfamily. Lipase family.

The protein localises to the secreted. The catalysed reaction is a triacylglycerol + H2O = a diacylglycerol + a fatty acid + H(+). It carries out the reaction 1,2,3-tri-(9Z-octadecenoyl)-glycerol + H2O = 1,2-di-(9Z-octadecenoyl)-sn-glycerol + (9Z)-octadecenoate + H(+). The enzyme catalyses 1,2,3-trioctanoylglycerol + H2O = 1,2-dioctanoyl-sn-glycerol + octanoate + H(+). Catalyzes the hydrolysis of triacylglycerols to yield free fatty acids, diacylglycerol, monoacylglycerol, and glycerol. Shows a preferential hydrolysis at the sn-3 position of triacylglycerol. This chain is Gastric triacylglycerol lipase (Lipf), found in Mus musculus (Mouse).